The chain runs to 156 residues: Lipoprotein signal peptidase (156 aa).

Helical transmembrane passes span 5–25, 64–84, and 89–109; these read FKFI…DQWV, YLHL…KTLL, and IAFG…FIHG. Catalysis depends on residues aspartate 113 and aspartate 130. A helical transmembrane segment spans residues 122–142; the sequence is NFAIFNVADVMINISVALILI.

It belongs to the peptidase A8 family.

It localises to the cell inner membrane. The catalysed reaction is Release of signal peptides from bacterial membrane prolipoproteins. Hydrolyzes -Xaa-Yaa-Zaa-|-(S,diacylglyceryl)Cys-, in which Xaa is hydrophobic (preferably Leu), and Yaa (Ala or Ser) and Zaa (Gly or Ala) have small, neutral side chains.. Its pathway is protein modification; lipoprotein biosynthesis (signal peptide cleavage). In terms of biological role, this protein specifically catalyzes the removal of signal peptides from prolipoproteins. In Campylobacter jejuni subsp. jejuni serotype O:6 (strain 81116 / NCTC 11828), this protein is Lipoprotein signal peptidase.